Consider the following 256-residue polypeptide: Fumarate reductase cytochrome b subunit (256 aa).

Topologically, residues 1-30 (MTNESILESYSGVTPERKKSRMPAKLDWWQ) are cytoplasmic. The helical transmembrane segment at 31–52 (SATGLFLGLFMIGHMFFVSTIL) threads the bilayer. H44 contacts heme b. Topologically, residues 53 to 76 (LGDNVMLWVTKKFELDFIFEGGKP) are periplasmic. A helical transmembrane segment spans residues 77–98 (IVVSFLAAFVFAVFIAHAFLAM). H93 provides a ligand contact to heme b. Residues 99-124 (RKFPINYRQYLTFKTHKDLMRHGDTT) lie on the Cytoplasmic side of the membrane. A helical transmembrane segment spans residues 125-149 (LWWIQAMTGFAMFFLGSVHLYIMMT). A heme b-binding site is contributed by H143. Residues 150-165 (QPQTIGPVSSSFRMVS) lie on the Periplasmic side of the membrane. The helical transmembrane segment at 166-188 (EWMWPLYLVLLFAVELHGSVGLY) threads the bilayer. H182 is a binding site for heme b. At 189 to 206 (RLAVKWGWFDGETPDKTR) the chain is on the cytoplasmic side. Residues 207-230 (ANLKKLKTLMSAFLIVLGLLTFGA) traverse the membrane as a helical segment. Over 231-256 (YVKKGLEQTDPNIDYKYFDYKRTHHR) the chain is Periplasmic.

The protein belongs to the diheme cytochrome b FrdC family. As to quaternary structure, part of an enzyme complex containing three subunits: a flavoprotein (frdA), an iron-sulfur protein (frdB), and diheme cytochrome b (frdC). Requires heme b as cofactor.

The protein resides in the cell inner membrane. Its function is as follows. The fumarate reductase enzyme complex is required for fumarate respiration using formate or sulfide as electron donor. This subunit anchors the complex in the membrane and binds a diheme cytochrome b. This Wolinella succinogenes (strain ATCC 29543 / DSM 1740 / CCUG 13145 / JCM 31913 / LMG 7466 / NCTC 11488 / FDC 602W) (Vibrio succinogenes) protein is Fumarate reductase cytochrome b subunit (frdC).